Consider the following 373-residue polypeptide: Queuine tRNA-ribosyltransferase (373 aa).

Asp90 acts as the Proton acceptor in catalysis. Substrate-binding positions include 90–94, Asp144, Gln193, and Gly220; that span reads DSGGF. The interval 251–257 is RNA binding; it reads GVGTPED. Catalysis depends on Asp270, which acts as the Nucleophile. Residues 275–279 are RNA binding; important for wobble base 34 recognition; the sequence is TRNAR. 4 residues coordinate Zn(2+): Cys308, Cys310, Cys313, and His339.

The protein belongs to the queuine tRNA-ribosyltransferase family. Homodimer. Within each dimer, one monomer is responsible for RNA recognition and catalysis, while the other monomer binds to the replacement base PreQ1. Requires Zn(2+) as cofactor.

It catalyses the reaction 7-aminomethyl-7-carbaguanine + guanosine(34) in tRNA = 7-aminomethyl-7-carbaguanosine(34) in tRNA + guanine. Its pathway is tRNA modification; tRNA-queuosine biosynthesis. Functionally, catalyzes the base-exchange of a guanine (G) residue with the queuine precursor 7-aminomethyl-7-deazaguanine (PreQ1) at position 34 (anticodon wobble position) in tRNAs with GU(N) anticodons (tRNA-Asp, -Asn, -His and -Tyr). Catalysis occurs through a double-displacement mechanism. The nucleophile active site attacks the C1' of nucleotide 34 to detach the guanine base from the RNA, forming a covalent enzyme-RNA intermediate. The proton acceptor active site deprotonates the incoming PreQ1, allowing a nucleophilic attack on the C1' of the ribose to form the product. After dissociation, two additional enzymatic reactions on the tRNA convert PreQ1 to queuine (Q), resulting in the hypermodified nucleoside queuosine (7-(((4,5-cis-dihydroxy-2-cyclopenten-1-yl)amino)methyl)-7-deazaguanosine). In Campylobacter lari (strain RM2100 / D67 / ATCC BAA-1060), this protein is Queuine tRNA-ribosyltransferase.